The following is a 979-amino-acid chain: Zinc finger BED domain-containing protein 6 (979 aa).

The tract at residues 1-89 (MSVCTLSVPV…ILAKKFSKDL (89 aa)) is required for nucleolar localization. The BED-type 1 zinc finger occupies 130–187 (AKTSIVWHFFHVDPQYTWRAICNLCEKSVSRGKPGSHLGTSTLQRHLQARHSPHWTRA). Residues Cys-151, Cys-154, His-175, and His-180 each contribute to the Zn(2+) site. Positions 207-232 (PSSGSNGSFEYIPTDPLDDNRMGKKH) are disordered. Residues 264–321 (AKTSAVWNFFYTDPQHISRAVCNICKRSVSRGRPGSHLGTSTLQRHLQATHPIHWAVA) form a BED-type 2 zinc finger. Zn(2+)-binding residues include Cys-285, Cys-288, His-309, and His-314. The tract at residues 333–383 (DEAETERSDLLSDTLHGEKSTGSQDLTAEDLSDSDSDEPMLEVENRSESPI) is disordered. Basic and acidic residues predominate over residues 337 to 351 (TERSDLLSDTLHGEK). Over residues 359-373 (TAEDLSDSDSDEPML) the composition is skewed to acidic residues. Ser-381 is modified (phosphoserine). An HATC (Hobo-Ac-Tam3) domain region spans residues 866-948 (VVDEYFKEKY…EQLMFLKMNL (83 aa)).

As to expression, expressed in pancreatic islet cells (at protein level).

It localises to the nucleus. Its subcellular location is the nucleolus. It is found in the cytoplasm. Functionally, transcriptional repressor which binds to the consensus sequence 5'-GCTCGC-3', transcription regulation may be tissue-specific. Regulates the expression of target genes such as: IGF2, PGAP6/TMEM8, ENHO, and PIANP. Acts as a transcriptional repressor of growth factor IGF2, thereby negatively regulating postnatal growth of muscles and internal organs, especially in females. Negatively regulates myoblast differentiation and myoblast mitochondrial activity via its regulation of IGF2 transcription. Negatively regulates the cell cycle of myoblasts, potentially via transcriptional regulation of the E2F family of transcription factors such as: E2F1 and E2F2. Positively regulates the cell cycle and survival of pancreatic beta cells. Binds to the CDH2 gene and may directly repress CDH2 transcription. Probably by controlling CDH2 expression, regulates pancreatic beta cell adhesion, and formation of cell-to-cell junctions between pancreatic beta cells and neural crest stem cells. May also play a role in embryonic beta cell differentiation. May play a role in insulin sensitivity and glucose clearance. The protein is Zinc finger BED domain-containing protein 6 of Homo sapiens (Human).